We begin with the raw amino-acid sequence, 271 residues long: Putative phosphoenolpyruvate synthase regulatory protein (271 aa).

151–158 (GVSRSGKT) contributes to the ADP binding site.

It belongs to the pyruvate, phosphate/water dikinase regulatory protein family. PSRP subfamily.

It catalyses the reaction [pyruvate, water dikinase] + ADP = [pyruvate, water dikinase]-phosphate + AMP + H(+). The enzyme catalyses [pyruvate, water dikinase]-phosphate + phosphate + H(+) = [pyruvate, water dikinase] + diphosphate. Bifunctional serine/threonine kinase and phosphorylase involved in the regulation of the phosphoenolpyruvate synthase (PEPS) by catalyzing its phosphorylation/dephosphorylation. The polypeptide is Putative phosphoenolpyruvate synthase regulatory protein (Burkholderia cenocepacia (strain ATCC BAA-245 / DSM 16553 / LMG 16656 / NCTC 13227 / J2315 / CF5610) (Burkholderia cepacia (strain J2315))).